A 164-amino-acid chain; its full sequence is MRLTSKGRYAVTAMLDVALHSQEGPVPLADISERQGISLSYLEQLFSRLRKNGLVASVRGPGGGYLLGKSANEIAVGMVISAVDESVDATRCQGREGCQGGDRCLTHTLWRDLSDRITDFLNNITLDELVNNKEVLDVADRQDADIRRTANGRIQETINVNLRA.

Residues 2 to 131 (RLTSKGRYAV…NNITLDELVN (130 aa)) enclose the HTH rrf2-type domain. Residues 28-51 (LADISERQGISLSYLEQLFSRLRK) constitute a DNA-binding region (H-T-H motif). The [2Fe-2S] cluster site is built by Cys92, Cys98, and Cys104.

[2Fe-2S] cluster serves as cofactor.

Its function is as follows. Regulates the transcription of several operons and genes involved in the biogenesis of Fe-S clusters and Fe-S-containing proteins. The protein is HTH-type transcriptional regulator IscR of Pectobacterium carotovorum subsp. carotovorum (strain PC1).